A 299-amino-acid polypeptide reads, in one-letter code: Apolipoprotein E (299 aa).

The signal sequence occupies residues Met-1 to Ala-18. Tandem repeats lie at residues Val-74–Val-95, Pro-96–Gly-117, Ala-118–Gly-139, Gln-140–Leu-161, Arg-162–Glu-183, Arg-184–Ala-205, and Gly-224–Glu-245. The tract at residues Val-74 to Glu-245 is 8 X 22 AA approximate tandem repeats. Methionine sulfoxide is present on Met-137. A Phosphoserine modification is found at Ser-141. The interval His-152–Arg-162 is LDL and other lipoprotein receptors binding. Leu-156 to Arg-159 provides a ligand contact to heparin. Positions Ala-204–Met-273 are lipid-binding and lipoprotein association. Gly-219–Leu-226 serves as a coordination point for heparin. Residues Arg-261–Met-273 form a specificity for association with VLDL region.

Belongs to the apolipoprotein A1/A4/E family. As to quaternary structure, homotetramer. May interact with ABCA1; functionally associated with ABCA1 in the biogenesis of HDLs. May interact with APP/A4 amyloid-beta peptide; the interaction is extremely stable in vitro but its physiological significance is unclear. May interact with MAPT. May interact with MAP2. In the cerebrospinal fluid, interacts with secreted SORL1. Interacts with PMEL; this allows the loading of PMEL luminal fragment on ILVs to induce fibril nucleation. Post-translationally, APOE exists as multiple glycosylated and sialylated glycoforms within cells and in plasma. The extent of glycosylation and sialylation are tissue and context specific. Glycated in plasma VLDL. In terms of processing, phosphorylated by FAM20C in the extracellular medium.

The protein resides in the secreted. The protein localises to the extracellular space. It is found in the extracellular matrix. It localises to the extracellular vesicle. Its subcellular location is the endosome. The protein resides in the multivesicular body. Functionally, APOE is an apolipoprotein, a protein associating with lipid particles, that mainly functions in lipoprotein-mediated lipid transport between organs via the plasma and interstitial fluids. APOE is a core component of plasma lipoproteins and is involved in their production, conversion and clearance. Apolipoproteins are amphipathic molecules that interact both with lipids of the lipoprotein particle core and the aqueous environment of the plasma. As such, APOE associates with chylomicrons, chylomicron remnants, very low density lipoproteins (VLDL) and intermediate density lipoproteins (IDL) but shows a preferential binding to high-density lipoproteins (HDL). It also binds a wide range of cellular receptors including the LDL receptor/LDLR, the LDL receptor-related proteins LRP1, LRP2 and LRP8 and the very low-density lipoprotein receptor/VLDLR that mediate the cellular uptake of the APOE-containing lipoprotein particles. Finally, APOE also has a heparin-binding activity and binds heparan-sulfate proteoglycans on the surface of cells, a property that supports the capture and the receptor-mediated uptake of APOE-containing lipoproteins by cells. A main function of APOE is to mediate lipoprotein clearance through the uptake of chylomicrons, VLDLs, and HDLs by hepatocytes. APOE is also involved in the biosynthesis by the liver of VLDLs as well as their uptake by peripheral tissues ensuring the delivery of triglycerides and energy storage in muscle, heart and adipose tissues. By participating in the lipoprotein-mediated distribution of lipids among tissues, APOE plays a critical role in plasma and tissues lipid homeostasis. APOE is also involved in two steps of reverse cholesterol transport, the HDLs-mediated transport of cholesterol from peripheral tissues to the liver, and thereby plays an important role in cholesterol homeostasis. First, it is functionally associated with ABCA1 in the biogenesis of HDLs in tissues. Second, it is enriched in circulating HDLs and mediates their uptake by hepatocytes. APOE also plays an important role in lipid transport in the central nervous system, regulating neuron survival and sprouting. The polypeptide is Apolipoprotein E (APOE) (Octodon degus (Degu)).